The sequence spans 583 residues: Aspartate--tRNA ligase (583 aa).

Residue glutamate 173 participates in L-aspartate binding. Residues 197–200 (QLFK) form an aspartate region. Arginine 219 lines the L-aspartate pocket. Residues 219-221 (RDE) and glutamine 228 each bind ATP. Residue histidine 444 coordinates L-aspartate. Glutamate 478 is an ATP binding site. Arginine 485 lines the L-aspartate pocket. 530-533 (GLDR) is a binding site for ATP.

This sequence belongs to the class-II aminoacyl-tRNA synthetase family. Type 1 subfamily. In terms of assembly, homodimer.

It is found in the cytoplasm. The catalysed reaction is tRNA(Asp) + L-aspartate + ATP = L-aspartyl-tRNA(Asp) + AMP + diphosphate. Catalyzes the attachment of L-aspartate to tRNA(Asp) in a two-step reaction: L-aspartate is first activated by ATP to form Asp-AMP and then transferred to the acceptor end of tRNA(Asp). This chain is Aspartate--tRNA ligase, found in Azobacteroides pseudotrichonymphae genomovar. CFP2.